Here is a 925-residue protein sequence, read N- to C-terminus: Neuropilin-2 (925 aa).

The signal sequence occupies residues 1-22 (MDMFPLTWIFLALYFSGHKVRS). Over 23–858 (QQDPPCGGRL…EKSWLYTLDP (836 aa)) the chain is Extracellular. 3 cysteine pairs are disulfide-bonded: cysteine 28-cysteine 55, cysteine 83-cysteine 105, and cysteine 149-cysteine 175. CUB domains follow at residues 28–142 (CGGR…YEIF) and 149–267 (CSKN…YYLV). N-linked (GlcNAc...) asparagine glycosylation is found at asparagine 152 and asparagine 157. Residues glutamate 197, aspartate 211, and aspartate 252 each contribute to the Ca(2+) site. A disulfide bridge connects residues cysteine 208 and cysteine 230. Intrachain disulfides connect cysteine 277-cysteine 427 and cysteine 434-cysteine 592. 2 consecutive F5/8 type C domains span residues 277-427 (CNAP…LFGC) and 434-592 (CSNM…VLGC). Over residues 297-310 (STFSDGRWTPQQSR) the composition is skewed to polar residues. Residues 297 to 317 (STFSDGRWTPQQSRLHGDDNG) are disordered. A disordered region spans residues 601-621 (VETLGPTVKSEETTTPYPMDE). The N-linked (GlcNAc...) asparagine glycan is linked to asparagine 629. The MAM domain maps to 642-802 (SGFNCNFDFP…TDVPLENCME (161 aa)). Acidic residues predominate over residues 820-830 (YEDEIDDDYEG). The tract at residues 820 to 849 (YEDEIDDDYEGDWNNSSSTSGAGSPSSGKE) is disordered. Asparagine 833 and asparagine 834 each carry an N-linked (GlcNAc...) asparagine glycan. The segment covering 835–846 (SSSTSGAGSPSS) has biased composition (low complexity). Residues 859 to 883 (ILITIIAMSSLGVLLGATCAGLLLY) traverse the membrane as a helical segment. Residues 884–925 (CTCSYSGLSSRSCTTLENYNFELYDGLKHKVKINHQKCCSEA) are Cytoplasmic-facing.

The protein belongs to the neuropilin family. Heterodimer with NRP1. Binds PLXNB1. Found in certain neuronal populations of the CNS, including dorsal root ganglia, and in other non-neuronal tissues including mesenchymal tissue lining in the ribs.

It is found in the membrane. In terms of biological role, high affinity receptor for semaphorins 3C, 3F, VEGF-165 and VEGF-145 isoforms of VEGF, and the PLGF-2 isoform of PGF. This Rattus norvegicus (Rat) protein is Neuropilin-2 (Nrp2).